Consider the following 325-residue polypeptide: VSG expression site-associated protein 117A (325 aa).

Residues 1-23 (MKVTIVELVVWLFSVNFFVVVAE) form the signal peptide. 3 N-linked (GlcNAc...) asparagine glycosylation sites follow: asparagine 72, asparagine 290, and asparagine 313.

In terms of biological role, not known but may be related to activation of the variant surface glycoprotein genes. The polypeptide is VSG expression site-associated protein 117A (Trypanosoma brucei brucei).